The sequence spans 158 residues: DNA-binding transcriptional repressor RacR (158 aa).

As to quaternary structure, homooctamer.

In terms of biological role, transcriptional regulator that represses the expression of ydaS and ydaT under normal physiological conditions. It binds to its own upstream sequence and represses the adjacent and divergently coded ydaS-ydaT operon. RacR-mediated down-regulation of ydaS and ydaT may be critical for cell survival. RacR ensures that the prophage DNA is maintained in the genome. When the expression of the racR gene is reduced, the prophage Rac is excised from the genome, possibly to counteract the lethal toxicity of YdaT. This Escherichia coli (strain K12) protein is DNA-binding transcriptional repressor RacR (racR).